The following is a 180-amino-acid chain: Type-1 fimbrial protein subunit (180 aa).

A signal peptide spans 1-22; sequence MKKVLLPLAALVLSATASNAMA. An intrachain disulfide couples Cys38 to Cys78.

This sequence belongs to the fimbrial protein family.

The protein resides in the fimbrium. Its function is as follows. Fimbriae (also called pili), polar filaments radiating from the surface of the bacterium to a length of 0.5-1.5 micrometers and numbering 100-300 per cell, enable bacteria to colonize the epithelium of specific host organs. The sequence is that of Type-1 fimbrial protein subunit (fimA) from Serratia marcescens.